The primary structure comprises 274 residues: Penicillin-insensitive murein endopeptidase (274 aa).

Positions M1–A19 are cleaved as a signal peptide. Cystine bridges form between C44/C265, C187/C235, and C216/C223. Zn(2+) is bound by residues H110, H113, D120, D147, H150, and H211. Residues D225 to L274 are disordered.

Belongs to the peptidase M74 family. Dimer. Requires Zn(2+) as cofactor.

The protein localises to the periplasm. Its function is as follows. Murein endopeptidase that cleaves the D-alanyl-meso-2,6-diamino-pimelyl amide bond that connects peptidoglycan strands. Likely plays a role in the removal of murein from the sacculus. This Citrobacter koseri (strain ATCC BAA-895 / CDC 4225-83 / SGSC4696) protein is Penicillin-insensitive murein endopeptidase.